Here is a 261-residue protein sequence, read N- to C-terminus: Protein FAM78B (261 aa).

Belongs to the FAM78 family.

The sequence is that of Protein FAM78B (FAM78B) from Homo sapiens (Human).